A 679-amino-acid chain; its full sequence is MSKNLLIELGLEELPAYVVTPSEKQLGERLATFLTENRLSFEDIQTFSTPRRLAVRVSGLADQQTDLTEDFKGPAKKIALDADGNFSKAAQGFVRGKGLTTDAIEFREVKGEEYVYVTKHEAGKPAKEVLLGVTEVLSAMTFPVSMHWANNSFEYIRPVHTLTVLLNDEALELDFLDIHSGRVSRGHRFLGTETTITSADSYEADLRSQFVIADAKERQEMIVEQIKTLEVEQGVQVDIDEDLLNEVLNLVEFPTAFMGSFEAKYLDVPEEVLVTSMKNHQRYFVVRDQAGHLMPNFVSVRNGNDQAIENVIKGNEKVLVARLEDGEFFWREDQKLQIADLVAKLTNVTFHEKIGSLAEHMDRTRVIAASLAKEANLSAEEVTAVDRAAQIYKFDLLTGMVGEFDELQGIMGEKYALLAGEDAAVATAIREHYLPDAAGGALPETKVGAVLALADKLDTLLSFFSVGLIPSGSNDPYALRRATQGIVRILDHFGWRIPMDKLVDSLYDLSFDSLTYANKADVMNFIRARVDKMMGKAAPKDIREAVLESSTFVVPEMLAAAEALVKASHTENYKPAVESLSRAFNLAEKADASVQVDPSLFENEQENTLFAAIQGLTLAGSAAQQLEQVFALSPVINDFFDNTMVMAEDQALKNNRLAILSDLVSKAKTIAAFNQLNTK.

The protein belongs to the class-II aminoacyl-tRNA synthetase family. In terms of assembly, tetramer of two alpha and two beta subunits.

The protein localises to the cytoplasm. The enzyme catalyses tRNA(Gly) + glycine + ATP = glycyl-tRNA(Gly) + AMP + diphosphate. The polypeptide is Glycine--tRNA ligase beta subunit (Streptococcus pyogenes serotype M18 (strain MGAS8232)).